Reading from the N-terminus, the 109-residue chain is Large ribosomal subunit protein uL24 (109 aa).

Residues 85–109 (KYGTDPKTNKKVRLSRKTNNLVGGQ) form a disordered region.

This sequence belongs to the universal ribosomal protein uL24 family. As to quaternary structure, part of the 50S ribosomal subunit.

Functionally, one of two assembly initiator proteins, it binds directly to the 5'-end of the 23S rRNA, where it nucleates assembly of the 50S subunit. In terms of biological role, one of the proteins that surrounds the polypeptide exit tunnel on the outside of the subunit. This is Large ribosomal subunit protein uL24 from Mycoplasmoides gallisepticum (strain R(low / passage 15 / clone 2)) (Mycoplasma gallisepticum).